The sequence spans 316 residues: Olfactory receptor 2K2 (316 aa).

The Extracellular portion of the chain corresponds to Met-1–Tyr-20. Asn-5 carries N-linked (GlcNAc...) asparagine glycosylation. The helical transmembrane segment at Pro-21 to Gly-41 threads the bilayer. The Cytoplasmic portion of the chain corresponds to Asn-42–Asn-65. The chain crosses the membrane as a helical span at residues Leu-66 to Leu-86. Residues Ser-87 to Cys-97 lie on the Extracellular side of the membrane. The cysteines at positions 97 and 188 are disulfide-linked. The helical transmembrane segment at Ala-98–Met-118 threads the bilayer. Topologically, residues Ala-119–Arg-143 are cytoplasmic. The helical transmembrane segment at Met-144–Leu-164 threads the bilayer. Topologically, residues Gln-165–Leu-199 are extracellular. Residues Val-200 to Ile-220 traverse the membrane as a helical segment. Residues Leu-221 to Ser-238 are Cytoplasmic-facing. A helical membrane pass occupies residues Thr-239–Leu-259. At Lys-260 to Asp-270 the chain is on the extracellular side. A helical transmembrane segment spans residues Lys-271 to Leu-291. Topologically, residues Arg-292–Leu-316 are cytoplasmic.

Belongs to the G-protein coupled receptor 1 family.

The protein localises to the cell membrane. Its function is as follows. Odorant receptor. The chain is Olfactory receptor 2K2 (OR2K2) from Homo sapiens (Human).